Reading from the N-terminus, the 216-residue chain is Uracil phosphoribosyltransferase (216 aa).

CTP is bound by residues arginine 29–lysine 30 and arginine 37. Lysine 30–arginine 34 is a binding site for GTP. Arginine 80 is a 5-phospho-alpha-D-ribose 1-diphosphate binding site. Glutamate 87–alanine 96 is a binding site for CTP. 5-phospho-alpha-D-ribose 1-diphosphate contacts are provided by residues arginine 105 and aspartate 140–threonine 148. Residues isoleucine 203 and glycine 208 to alanine 210 each bind uracil. Aspartate 209 is a binding site for 5-phospho-alpha-D-ribose 1-diphosphate.

The protein belongs to the UPRTase family. In terms of assembly, homotetramer. The cofactor is Mg(2+).

It carries out the reaction UMP + diphosphate = 5-phospho-alpha-D-ribose 1-diphosphate + uracil. Its pathway is pyrimidine metabolism; UMP biosynthesis via salvage pathway; UMP from uracil: step 1/1. Allosterically activated by GTP. Inhibited by CTP and UMP in combination. In terms of biological role, catalyzes the conversion of uracil and 5-phospho-alpha-D-ribose 1-diphosphate (PRPP) to UMP and diphosphate. This Saccharolobus solfataricus (strain ATCC 35092 / DSM 1617 / JCM 11322 / P2) (Sulfolobus solfataricus) protein is Uracil phosphoribosyltransferase (upp).